The following is a 413-amino-acid chain: Type II methyltransferase M.NaeI (413 aa).

In terms of domain architecture, SAM-dependent MTase C5-type spans 4-317 (LEVVEICAGA…KRIRAALNME (314 aa)). Cysteine 78 is a catalytic residue.

Belongs to the class I-like SAM-binding methyltransferase superfamily. C5-methyltransferase family.

It carries out the reaction a 2'-deoxycytidine in DNA + S-adenosyl-L-methionine = a 5-methyl-2'-deoxycytidine in DNA + S-adenosyl-L-homocysteine + H(+). A methylase that recognizes the double-stranded sequence 5'-GCCGGC-3', methylates C-? on both strands, and protects the DNA from cleavage by the NaeI endonuclease. The chain is Type II methyltransferase M.NaeI from Lentzea aerocolonigenes (Lechevalieria aerocolonigenes).